We begin with the raw amino-acid sequence, 788 residues long: 5-methyltetrahydropteroyltriglutamate--homocysteine methyltransferase (788 aa).

5-methyltetrahydropteroyltri-L-glutamate contacts are provided by residues 24–27 (RELK) and Lys-140. Residues 463 to 465 (IGS) and Glu-516 contribute to the L-homocysteine site. L-methionine is bound by residues 463–465 (IGS) and Glu-516. 5-methyltetrahydropteroyltri-L-glutamate contacts are provided by residues 547 to 548 (RC) and Trp-593. Residue Asp-631 participates in L-homocysteine binding. Asp-631 is a binding site for L-methionine. Residue Glu-637 participates in 5-methyltetrahydropteroyltri-L-glutamate binding. Zn(2+) is bound by residues His-673, Cys-675, and Glu-697. The active-site Proton donor is the His-726. Cys-758 is a binding site for Zn(2+).

It belongs to the vitamin-B12 independent methionine synthase family. Zn(2+) serves as cofactor.

The catalysed reaction is 5-methyltetrahydropteroyltri-L-glutamate + L-homocysteine = tetrahydropteroyltri-L-glutamate + L-methionine. It participates in amino-acid biosynthesis; L-methionine biosynthesis via de novo pathway; L-methionine from L-homocysteine (MetE route): step 1/1. Its function is as follows. Catalyzes the transfer of a methyl group from 5-methyltetrahydrofolate to homocysteine resulting in methionine formation. This chain is 5-methyltetrahydropteroyltriglutamate--homocysteine methyltransferase, found in Rhodopseudomonas palustris (strain ATCC BAA-98 / CGA009).